Reading from the N-terminus, the 1111-residue chain is MLRSSRSRLVTRNILLRQFKNGNNVRLMNATRFQHNGIVGNEKLASDSQKFVDESYHWMQYRKQMNDPVSRQRLEQLESQWVKSIQLKQDDKGKDIDQPESENRKKEEEQVPTEEKDNDTAKESETSQQRDSVAETQGPASTSGGASGNGESSGNGSGDDGNNGSGNGKPSKNAKQPFPEVYPQVMALPISRRPLFPGFYKAVVISDERVMKAIKDMSDRQQPYIGAFLLKDSTVDTDVIHKADEVYNVGVFAQVTSAFPSKDEKTGAETMTALLYPHRRIKLDELIPPTSEQNLKDESDVSKSEGVENNEQEVVKASLQKMENMKDVEEDDDENLTGFLKDYDVSLVNVSNLADKEFNPNSPVINALTSEILKVFKEISQLNTMFREQIATFSASIQSATTNIFEEPARLADFAAAVSAGEEEELQEILESLDIEQRLEKALTVLKKELMNAELQNKISKDVETKIQKRQREYYLMEQLKGIKRELGIDDGRDKLIESFKDRVSKLQLPETVQKVFDDEITKLATLETSQSEFGVIRNYLDWITSLPWGIISKEQYSIPKAKKILDEDHYGMKDVKDRILEFIAVGKLLGKVDGKIICFVGPPGVGKTSIGKSIARSLNRQFFRFSVGGMTDVAEIKGHRRTYIGALPGRVIQALKKCQTQNPLILIDEIDKIGHGGIHGDPAAALLELLDPEQNNSFLDNYMDIPIDLSKVLFVCTANSLETIPRPLLDRMEVIELTGYVAEEKVKIAENYLSPSAKKSAGLDNANVNITENAIVSLMKHYCRESGVRSLKKHIEKIYRKAALNVVKQLSIDDKPMENEEVKDQKDIKVKQSENKSSAEASTVESTTEENELIKTQKSHDNKGSLEVPETVSVTVDENNLKDYVGPPIFTTDRLYESTPPGVVMGLAWTSMGGCAMYVESVLEQPLTHSTQPTLERTGQLGDVMKESSRLAYSFSKMYLAKKFPENRFFEVAKIHLHCPEGATPKDGPSAGVTMASSFLSLALNKGLDPTVAMTGELTLTGKVLRIGGLREKAVAAKRSGAKTIIFPKDNLSDWAELPENVKEGLEPLAADWYEDVFQRLFGDVDTNKGNTVWSEDFKKIDEKRNKETK.

The N-terminal 21 residues, 1–21 (MLRSSRSRLVTRNILLRQFKN), are a transit peptide targeting the mitochondrion. Disordered regions lie at residues 85–177 (IQLK…AKQP) and 288–311 (PPTS…ENNE). The segment covering 88 to 125 (KQDDKGKDIDQPESENRKKEEEQVPTEEKDNDTAKESE) has biased composition (basic and acidic residues). The segment covering 126 to 135 (TSQQRDSVAE) has biased composition (polar residues). Residues 145 to 167 (GASGNGESSGNGSGDDGNNGSGN) show a composition bias toward gly residues. One can recognise a Lon N-terminal domain in the interval 185–450 (VMALPISRRP…KALTVLKKEL (266 aa)). Over residues 294–306 (NLKDESDVSKSEG) the composition is skewed to basic and acidic residues. 602 to 609 (GPPGVGKT) contacts ATP. Basic and acidic residues-rich tracts occupy residues 819–835 (ENEE…KQSE) and 853–865 (ELIK…DNKG). A disordered region spans residues 819 to 866 (ENEEVKDQKDIKVKQSENKSSAEASTVESTTEENELIKTQKSHDNKGS). In terms of domain architecture, Lon proteolytic spans 899–1085 (STPPGVVMGL…EDVFQRLFGD (187 aa)). Active-site residues include serine 991 and lysine 1034.

It belongs to the peptidase S16 family. Homohexamer or homoheptamer. Organized in a ring with a central cavity.

It localises to the mitochondrion matrix. It catalyses the reaction Hydrolysis of proteins in presence of ATP.. Functionally, ATP-dependent serine protease that mediates the selective degradation of misfolded, unassembled or oxidatively damaged polypeptides as well as certain short-lived regulatory proteins in the mitochondrial matrix. May also have a chaperone function in the assembly of inner membrane protein complexes. Participates in the regulation of mitochondrial gene expression and in the maintenance of the integrity of the mitochondrial genome. Binds to mitochondrial DNA in a site-specific manner. This is Lon protease homolog, mitochondrial from Kluyveromyces lactis (strain ATCC 8585 / CBS 2359 / DSM 70799 / NBRC 1267 / NRRL Y-1140 / WM37) (Yeast).